The primary structure comprises 217 residues: Ranaspumin (217 aa).

4 disulfide bridges follow: C18-C67, C38-C114, C125-C168, and C146-C207.

As to quaternary structure, monomer. In terms of tissue distribution, exclusively expressed in females in the early oviduct, the glandular part of the oviduct (pars convoluta dilata) and in the cloaca.

Its subcellular location is the secreted. Functionally, acts as a surfactant. Is the major protein constituent (45%) of foam nests. Has no antimicrobial activity, no larvicidal activity, and is not toxic to mice. The protein is Ranaspumin of Leptodactylus vastus (Northeastern pepper frog).